The primary structure comprises 283 residues: Pantothenate synthetase (283 aa).

Met-30–His-37 lines the ATP pocket. Residue His-37 is the Proton donor of the active site. Gln-61 is a binding site for (R)-pantoate. Gln-61 contacts beta-alanine. Residue Gly-147–Asp-150 coordinates ATP. Gln-153 lines the (R)-pantoate pocket. ATP contacts are provided by residues Ile-176 and Val-184 to Arg-187.

Belongs to the pantothenate synthetase family. Homodimer.

The protein resides in the cytoplasm. The enzyme catalyses (R)-pantoate + beta-alanine + ATP = (R)-pantothenate + AMP + diphosphate + H(+). Its pathway is cofactor biosynthesis; (R)-pantothenate biosynthesis; (R)-pantothenate from (R)-pantoate and beta-alanine: step 1/1. Its function is as follows. Catalyzes the condensation of pantoate with beta-alanine in an ATP-dependent reaction via a pantoyl-adenylate intermediate. In Chlorobium phaeobacteroides (strain DSM 266 / SMG 266 / 2430), this protein is Pantothenate synthetase.